Consider the following 539-residue polypeptide: Alpha-aminoadipic semialdehyde dehydrogenase (539 aa).

A mitochondrion-targeting transit peptide spans 1-26 (MWRVPGLLCVRVARKSKFSGSWNRPA). K94 carries the N6-acetyllysine; alternate modification. An N6-succinyllysine; alternate modification is found at K94. Residues 192–194 (TAF), K218, 258–259 (GT), 274–275 (GS), 274–279 (GSTQVG), and 296–297 (EL) each bind NAD(+). E296 (proton acceptor) is an active-site residue. C330 serves as the catalytic Nucleophile. T331 serves as a coordination point for (S)-2-amino-6-oxohexanoate. E427 lines the NAD(+) pocket. Position 462 is an N6-acetyllysine (K462). (S)-2-amino-6-oxohexanoate is bound by residues G489 and A490. K500 bears the N6-acetyllysine mark. At K537 the chain carries N6-succinyllysine.

The protein belongs to the aldehyde dehydrogenase family. Homotetramer.

The protein resides in the cytoplasm. The protein localises to the cytosol. It localises to the nucleus. It is found in the mitochondrion. It catalyses the reaction nonanal + NAD(+) + H2O = nonanoate + NADH + 2 H(+). It carries out the reaction (S)-2-amino-6-oxohexanoate + NAD(+) + H2O = L-2-aminoadipate + NADH + 2 H(+). The catalysed reaction is betaine aldehyde + NAD(+) + H2O = glycine betaine + NADH + 2 H(+). The enzyme catalyses an aldehyde + NAD(+) + H2O = a carboxylate + NADH + 2 H(+). It catalyses the reaction hexanal + NAD(+) + H2O = hexanoate + NADH + 2 H(+). It carries out the reaction octanal + NAD(+) + H2O = octanoate + NADH + 2 H(+). The catalysed reaction is (E)-non-2-enal + NAD(+) + H2O = (E)-non-2-enoate + NADH + 2 H(+). The enzyme catalyses (E)-4-hydroxynon-2-enal + NAD(+) + H2O = (E)-4-hydroxynon-2-enoate + NADH + 2 H(+). It participates in amine and polyamine biosynthesis; betaine biosynthesis via choline pathway; betaine from betaine aldehyde: step 1/1. Its function is as follows. Multifunctional enzyme mediating important protective effects. Metabolizes betaine aldehyde to betaine, an important cellular osmolyte and methyl donor. Protects cells from oxidative stress by metabolizing a number of lipid peroxidation-derived aldehydes. Involved in lysine catabolism. The chain is Alpha-aminoadipic semialdehyde dehydrogenase (ALDH7A1) from Bos taurus (Bovine).